Reading from the N-terminus, the 146-residue chain is Catabolic 3-dehydroquinase (146 aa).

The Proton acceptor role is filled by Tyr24. The substrate site is built by Asn78, His84, and Asp91. The active-site Proton donor is His104. Substrate contacts are provided by residues 105–106 and Arg115; that span reads IT.

It belongs to the type-II 3-dehydroquinase family. As to quaternary structure, homododecamer. Adopts a ring-like structure, composed of an arrangement of two hexameric rings stacked on top of one another.

It catalyses the reaction 3-dehydroquinate = 3-dehydroshikimate + H2O. Its pathway is aromatic compound metabolism; 3,4-dihydroxybenzoate biosynthesis; 3,4-dihydroxybenzoate from 3-dehydroquinate: step 1/2. Functionally, is involved in the catabolism of quinate. Allows the utilization of quinate as carbon source via the beta-ketoadipate pathway. The chain is Catabolic 3-dehydroquinase from Candida dubliniensis (strain CD36 / ATCC MYA-646 / CBS 7987 / NCPF 3949 / NRRL Y-17841) (Yeast).